We begin with the raw amino-acid sequence, 567 residues long: Myo-inositol transporter 1 (567 aa).

Topologically, residues 1 to 88 (MSARPAQPNI…KFVWMLVSAA (88 aa)) are cytoplasmic. Residues 14–42 (IRTSLSGYPSPTHSGSSTPASLEFSDGRL) are disordered. Positions 16–33 (TSLSGYPSPTHSGSSTPA) are enriched in polar residues. Residues 89-109 (AISGLLFGYDTAAISGMLVII) traverse the membrane as a helical segment. The Extracellular portion of the chain corresponds to 110–123 (KDDLGTILSSWQKE). A helical transmembrane segment spans residues 124–144 (VITSATTLGALLGGLAAGCVS). Residues 145–150 (DFTGRR) lie on the Cytoplasmic side of the membrane. Residues 151–171 (LVIVFANVAFIGGSICQAACH) form a helical membrane-spanning segment. Residues 172-180 (TVAAMIAGR) are Extracellular-facing. The chain crosses the membrane as a helical span at residues 181–201 (FIVGLGVGLASCIVPLYIGEL). Topologically, residues 202-209 (APTMIRGR) are cytoplasmic. The helical transmembrane segment at 210–230 (LVTINCVAVTLGQVVAYAIGA) threads the bilayer. Residues 231–240 (SFQNVHNGWR) lie on the Extracellular side of the membrane. Residues 241 to 261 (WIVGLGAMPSFVQLAAIGFLP) form a helical membrane-spanning segment. The Cytoplasmic portion of the chain corresponds to 262–343 (ESPRILLLRS…IGCGLQAAQQ (82 aa)). The helical transmembrane segment at 344–364 (LCGFNTLMYYSATIFAMLGFN) threads the bilayer. Asparagine 365 carries an N-linked (GlcNAc...) asparagine glycan. Over 365 to 367 (NAT) the chain is Extracellular. Residues 368–388 (AVGLIVATVNVLFTLVALKIV) traverse the membrane as a helical segment. Residues 389 to 397 (DPVGRRRTM) are Cytoplasmic-facing. Residues 398–418 (LFTLPIMILALVFAAIFFYYL) traverse the membrane as a helical segment. Over 419–435 (TLSTNGILIEDHDYPRS) the chain is Extracellular. The helical transmembrane segment at 436 to 456 (LSILVLLSMLLYVAGYATGLG) threads the bilayer. Residues 457–476 (NIPWQQGELFRLEVRGIGTS) are Cytoplasmic-facing. A helical membrane pass occupies residues 477-497 (ICTAVNWSCNMLIAGTFLSLM). At 498–503 (DAATPS) the chain is on the extracellular side. Residues 504–524 (GAFGIYAGFCVIGWVFCWMLY) traverse the membrane as a helical segment. Topologically, residues 525 to 567 (PETSGLSLEEVYFVFEEGFGIKKSQQLRKQKLVEAAKLKAIFE) are cytoplasmic.

The protein belongs to the major facilitator superfamily. Sugar transporter (TC 2.A.1.1) family.

Its subcellular location is the cell membrane. It carries out the reaction myo-inositol(out) + H(+)(out) = myo-inositol(in) + H(+)(in). Functionally, may function as a transporter or as a sensor for myo-inositol. This Cryptococcus neoformans var. grubii serotype A (strain H99 / ATCC 208821 / CBS 10515 / FGSC 9487) (Filobasidiella neoformans var. grubii) protein is Myo-inositol transporter 1.